Here is a 748-residue protein sequence, read N- to C-terminus: Acetyl-CoA decarbonylase/synthase complex subunit beta 1 (748 aa).

C480, C483, C569, and C571 together coordinate [Ni-Fe-S] cluster.

It belongs to the CdhC family. Monomer. The ACDS complex is made up of alpha, epsilon, beta, gamma and delta chains with a probable stoichiometry of (alpha(2)epsilon(2))(4)-beta(8)-(gamma(1)delta(1))(8) (Potential). [Ni-Fe-S] cluster is required as a cofactor.

The enzyme catalyses Co(I)-[corrinoid Fe-S protein] + acetyl-CoA + H(+) = methyl-Co(III)-[corrinoid Fe-S protein] + CO + CoA. In terms of biological role, part of a complex that catalyzes the reversible cleavage of acetyl-CoA, allowing autotrophic growth from CO(2). The alpha-epsilon complex generates CO from CO(2), while the beta subunit (this protein) combines the CO with CoA and a methyl group to form acetyl-CoA. The methyl group, which is incorporated into acetyl-CoA, is transferred to the beta subunit by a corrinoid iron-sulfur protein (the gamma-delta complex). The sequence is that of Acetyl-CoA decarbonylase/synthase complex subunit beta 1 (cdhC1) from Methanocaldococcus jannaschii (strain ATCC 43067 / DSM 2661 / JAL-1 / JCM 10045 / NBRC 100440) (Methanococcus jannaschii).